The following is a 631-amino-acid chain: Chimallin (631 aa).

Residues 1 to 29 (MIRDTATNTTQTQAAPQQAPAQQFTQAPQ) show a composition bias toward low complexity. Residues 1-63 (MIRDTATNTT…FTRSGNVQGG (63 aa)) are disordered. Positions 32–59 (PMQSTQSQPTPSYAGTGGINSQFTRSGN) are enriched in polar residues. Homotetramerization stretches follow at residues 590-611 (QRFM…QVHS) and 622-631 (QYQTGPSSFY).

It belongs to the Phikzvirus chimallin family. Homotetramer. The tetrameric protomers further assemble as a square grid.

It is found in the host cytoplasm. Its function is as follows. Self-assembles to form a proteinaceous shell that encloses the viral DNA and compartmentalizes proteins and DNA during viral infection. This micrometer-scale compartment contains narrow pores and is the site of viral replication, with the proteins involved in DNA replication localized inside. Provides a surface for docking of capsids during packaging. Probably protects the viral genome against host defenses. This is Chimallin from Pseudomonas chlororaphis (Pseudomonas chlororaphis phage 201phi2-1).